A 219-amino-acid chain; its full sequence is Type-5 uracil-DNA glycosylase (219 aa).

[4Fe-4S] cluster contacts are provided by cysteine 13, cysteine 16, cysteine 115, and cysteine 130.

This sequence belongs to the uracil-DNA glycosylase (UDG) superfamily. Type 5 (UDGb) family.

DNA glycosylase with broad substrate specificity. Can remove uracil from double-stranded DNA containing either a U/G, U/A, U/C or U/T base pair. Can also excise hypoxanthine from double-stranded DNA containing G/I, T/I, and A/I base pairs, xanthine from both double-stranded and single stranded DNA, thymine from G/T mismatched DNA, 5'-hydroxymethyluracil and 5'-fluorouracil. This is Type-5 uracil-DNA glycosylase from Thermus thermophilus (strain ATCC 27634 / DSM 579 / HB8).